The primary structure comprises 59 residues: Early protein GP1A (59 aa).

This is Early protein GP1A (1A) from Bacillus phage PZA (Bacteriophage PZA).